We begin with the raw amino-acid sequence, 459 residues long: uncharacterized protein (459 aa).

One can recognise a TRAM domain in the interval 6–64 (KNKQEKNIIITIKRLGINGEGIGYYKKKIIFIPGALPNEVVVAKIVDRHPHYLEGELVR). 4 residues coordinate S-adenosyl-L-methionine: Gln289, Tyr318, Glu339, and Asp387. The active-site Nucleophile is the Cys414.

Belongs to the class I-like SAM-binding methyltransferase superfamily. RNA M5U methyltransferase family.

This is an uncharacterized protein from Lactobacillus johnsonii (strain CNCM I-12250 / La1 / NCC 533).